Here is a 348-residue protein sequence, read N- to C-terminus: GDSL esterase/lipase At4g30140 (348 aa).

The signal sequence occupies residues 1 to 28 (MVEGESKALWIILATVFAVAAVAPAVHG). The active-site Nucleophile is the Ser-40. Active-site residues include Asp-316 and His-319. Asn-342 carries an N-linked (GlcNAc...) asparagine glycan.

The protein belongs to the 'GDSL' lipolytic enzyme family.

It localises to the secreted. The sequence is that of GDSL esterase/lipase At4g30140 from Arabidopsis thaliana (Mouse-ear cress).